Consider the following 880-residue polypeptide: Valine--tRNA ligase (880 aa).

The 'HIGH' region signature appears at 49-59; sequence PNVTGRLHLGH. Positions 525–529 match the 'KMSKS' region motif; sequence KMSKS. Lys-528 is an ATP binding site. Positions 809-879 form a coiled coil; that stretch reads LEGLINIDEE…AVQKRMAELK (71 aa).

The protein belongs to the class-I aminoacyl-tRNA synthetase family. ValS type 1 subfamily. In terms of assembly, monomer.

It localises to the cytoplasm. The catalysed reaction is tRNA(Val) + L-valine + ATP = L-valyl-tRNA(Val) + AMP + diphosphate. Its function is as follows. As ValRS can inadvertently accommodate and process structurally similar amino acids such as threonine, to avoid such errors, it has a 'posttransfer' editing activity that hydrolyzes mischarged Thr-tRNA(Val) in a tRNA-dependent manner. Catalyzes the attachment of valine to tRNA(Val). The sequence is that of Valine--tRNA ligase from Bacillus subtilis (strain 168).